A 635-amino-acid chain; its full sequence is 1-deoxy-D-xylulose-5-phosphate synthase (635 aa).

Residues His-78 and 119–121 each bind thiamine diphosphate; that span reads GHS. Mg(2+) is bound at residue Asp-151. Residues 152–153, Asn-180, Tyr-289, and Glu-371 each bind thiamine diphosphate; that span reads GA. Residue Asn-180 coordinates Mg(2+).

Belongs to the transketolase family. DXPS subfamily. As to quaternary structure, homodimer. Mg(2+) serves as cofactor. Requires thiamine diphosphate as cofactor.

The enzyme catalyses D-glyceraldehyde 3-phosphate + pyruvate + H(+) = 1-deoxy-D-xylulose 5-phosphate + CO2. It functions in the pathway metabolic intermediate biosynthesis; 1-deoxy-D-xylulose 5-phosphate biosynthesis; 1-deoxy-D-xylulose 5-phosphate from D-glyceraldehyde 3-phosphate and pyruvate: step 1/1. Its function is as follows. Catalyzes the acyloin condensation reaction between C atoms 2 and 3 of pyruvate and glyceraldehyde 3-phosphate to yield 1-deoxy-D-xylulose-5-phosphate (DXP). In Bartonella tribocorum (strain CIP 105476 / IBS 506), this protein is 1-deoxy-D-xylulose-5-phosphate synthase.